Reading from the N-terminus, the 128-residue chain is Disintegrin gabonin-1 (128 aa).

Residues 1–20 (MIQVLLVIICLAVFPYQGSS) form the signal peptide. A propeptide spanning residues 21–47 (IILESGNVNDYEIVYPKKVTVLPTGAM) is cleaved from the precursor. Positions 47 to 112 (MNSAHPCCDP…DCPRNPNKGE (66 aa)) constitute a Disintegrin domain. 4 disulfides stabilise this stretch: Cys53–Cys76, Cys67–Cys73, Cys72–Cys97, and Cys85–Cys104. Residues 89 to 91 (RGD) carry the Cell attachment site motif. Residues 108 to 128 (PNKGESDELEWSAAATGSVLM) form a disordered region.

Belongs to the disintegrin family. Dimeric disintegrin subfamily. As to quaternary structure, heterodimer with bitisgabonin (bitisgabonin-1 is the name of the heterodimer); disulfide-linked. In terms of tissue distribution, expressed by the venom gland.

It is found in the secreted. Its function is as follows. The heterodimer bitisgabonin-1 is a potent inhibitor of the adhesion of the RGD-dependent integrin alpha-5/beta-1 (ITGA5/ITGB1) to immobilized fibronectin. This chain is Disintegrin gabonin-1, found in Bitis gabonica (Gaboon adder).